The following is a 194-amino-acid chain: Anthranilate synthase component 2 (194 aa).

The region spanning 2–194 (KIFFIDNFDS…QSVGFLEGLL (193 aa)) is the Glutamine amidotransferase type-1 domain. 57–59 (GPG) is an L-glutamine binding site. The active-site Nucleophile; for GATase activity is the Cys-84. Residues Gln-88 and 134–135 (SL) contribute to the L-glutamine site. Active-site for GATase activity residues include His-170 and Glu-172.

Heterotetramer consisting of two non-identical subunits: a beta subunit (TrpG) and a large alpha subunit (TrpE).

It carries out the reaction chorismate + L-glutamine = anthranilate + pyruvate + L-glutamate + H(+). It participates in amino-acid biosynthesis; L-tryptophan biosynthesis; L-tryptophan from chorismate: step 1/5. Functionally, part of a heterotetrameric complex that catalyzes the two-step biosynthesis of anthranilate, an intermediate in the biosynthesis of L-tryptophan. In the first step, the glutamine-binding beta subunit (TrpG) of anthranilate synthase (AS) provides the glutamine amidotransferase activity which generates ammonia as a substrate that, along with chorismate, is used in the second step, catalyzed by the large alpha subunit of AS (TrpE) to produce anthranilate. In the absence of TrpG, TrpE can synthesize anthranilate directly from chorismate and high concentrations of ammonia. The sequence is that of Anthranilate synthase component 2 (trpG) from Helicobacter pylori (strain ATCC 700392 / 26695) (Campylobacter pylori).